We begin with the raw amino-acid sequence, 321 residues long: Probable proline iminopeptidase (321 aa).

The 262-residue stretch at 35-296 (KPVVFLHGGP…IVVPDAGHSM (262 aa)) folds into the AB hydrolase-1 domain. The active-site Nucleophile is the Ser-110. Asp-266 is a catalytic residue. The active-site Proton donor is the His-294.

This sequence belongs to the peptidase S33 family.

It is found in the cytoplasm. The catalysed reaction is Release of N-terminal proline from a peptide.. In terms of biological role, specifically catalyzes the removal of N-terminal proline residues from peptides. This chain is Probable proline iminopeptidase (pip), found in Leptolyngbya boryana (Plectonema boryanum).